A 564-amino-acid chain; its full sequence is 2-succinyl-5-enolpyruvyl-6-hydroxy-3-cyclohexene-1-carboxylate synthase (564 aa).

This sequence belongs to the TPP enzyme family. MenD subfamily. Homodimer. It depends on Mg(2+) as a cofactor. Requires Mn(2+) as cofactor. Thiamine diphosphate serves as cofactor.

The catalysed reaction is isochorismate + 2-oxoglutarate + H(+) = 5-enolpyruvoyl-6-hydroxy-2-succinyl-cyclohex-3-ene-1-carboxylate + CO2. Its pathway is quinol/quinone metabolism; 1,4-dihydroxy-2-naphthoate biosynthesis; 1,4-dihydroxy-2-naphthoate from chorismate: step 2/7. It functions in the pathway quinol/quinone metabolism; menaquinone biosynthesis. In terms of biological role, catalyzes the thiamine diphosphate-dependent decarboxylation of 2-oxoglutarate and the subsequent addition of the resulting succinic semialdehyde-thiamine pyrophosphate anion to isochorismate to yield 2-succinyl-5-enolpyruvyl-6-hydroxy-3-cyclohexene-1-carboxylate (SEPHCHC). The protein is 2-succinyl-5-enolpyruvyl-6-hydroxy-3-cyclohexene-1-carboxylate synthase of Vibrio vulnificus (strain YJ016).